A 657-amino-acid polypeptide reads, in one-letter code: Acetyl-coenzyme A synthetase (657 aa).

Residues R192–K195 and T311 each bind CoA. ATP-binding positions include G387–P389, D411–T416, D504, R519, and R530. The Mg(2+) site is built by H543 and V546. Position 592 (R592) interacts with CoA. Residue K617 is modified to N6-acetyllysine.

It belongs to the ATP-dependent AMP-binding enzyme family. Requires Mg(2+) as cofactor. In terms of processing, acetylated. Deacetylation by the SIR2-homolog deacetylase activates the enzyme.

The enzyme catalyses acetate + ATP + CoA = acetyl-CoA + AMP + diphosphate. In terms of biological role, catalyzes the conversion of acetate into acetyl-CoA (AcCoA), an essential intermediate at the junction of anabolic and catabolic pathways. AcsA undergoes a two-step reaction. In the first half reaction, AcsA combines acetate with ATP to form acetyl-adenylate (AcAMP) intermediate. In the second half reaction, it can then transfer the acetyl group from AcAMP to the sulfhydryl group of CoA, forming the product AcCoA. The protein is Acetyl-coenzyme A synthetase of Campylobacter jejuni subsp. jejuni serotype O:2 (strain ATCC 700819 / NCTC 11168).